Consider the following 249-residue polypeptide: Mannose-binding protein C (249 aa).

A signal peptide spans 1–20 (MSLFTSLPFLLLTAVTASCA). One can recognise a Collagen-like domain in the interval 43 to 101 (GINGIPGKDGRDGAKGEKGEPGQGLRGSQGPPGKMGPQGTPGIPGIPGPIGQKGDPGEN). The tract at residues 43–103 (GINGIPGKDG…QKGDPGENMG (61 aa)) is disordered. Position 48 is a 4-hydroxyproline (Pro-48). The segment covering 50–62 (KDGRDGAKGEKGE) has biased composition (basic and acidic residues). A 4-hydroxyproline mark is found at Pro-63, Pro-74, Pro-83, and Pro-86. Residues 79 to 95 (PQGTPGIPGIPGPIGQK) show a composition bias toward low complexity. Positions 113–131 (RATLQSELNQIKNWLIFSL) form a coiled coil. A C-type lectin domain is found at 135-246 (VGKKAFFTNG…CSASFLTVCE (112 aa)). 2 cysteine pairs are disulfide-bonded: Cys-156–Cys-245 and Cys-223–Cys-237.

In terms of assembly, oligomeric complex of 3 or more homotrimers. Interacts with MASP1 and MASP2. Interacts with MEP1A and MEP1B and may inhibit their catalytic activity. Hydroxylation on proline residues within the sequence motif, GXPG, is most likely to be 4-hydroxy as this fits the requirement for 4-hydroxylation in vertebrates.

Its subcellular location is the secreted. In terms of biological role, calcium-dependent lectin involved in innate immune defense. Binds mannose, fucose and N-acetylglucosamine on different microorganisms and activates the lectin complement pathway. Binds to late apoptotic cells, as well as to apoptotic blebs and to necrotic cells, but not to early apoptotic cells, facilitating their uptake by macrophages. This chain is Mannose-binding protein C (MBL), found in Bos taurus (Bovine).